Consider the following 332-residue polypeptide: Holliday junction branch migration complex subunit RuvB (332 aa).

Positions 1–181 (MSRILDNEQM…FGITGHMEYY (181 aa)) are large ATPase domain (RuvB-L). Residues Leu-20, Arg-21, Gly-62, Lys-65, Thr-66, Thr-67, 128–130 (EDF), Arg-171, Tyr-181, and Arg-218 each bind ATP. Residue Thr-66 coordinates Mg(2+). The tract at residues 182–252 (EEADLTEIVE…ITDQALSMLD (71 aa)) is small ATPAse domain (RuvB-S). A head domain (RuvB-H) region spans residues 255 to 332 (HEGLDYVDQK…EHLGYEYMEK (78 aa)). Positions 291, 310, 312, and 315 each coordinate DNA.

The protein belongs to the RuvB family. Homohexamer. Forms an RuvA(8)-RuvB(12)-Holliday junction (HJ) complex. HJ DNA is sandwiched between 2 RuvA tetramers; dsDNA enters through RuvA and exits via RuvB. An RuvB hexamer assembles on each DNA strand where it exits the tetramer. Each RuvB hexamer is contacted by two RuvA subunits (via domain III) on 2 adjacent RuvB subunits; this complex drives branch migration. In the full resolvosome a probable DNA-RuvA(4)-RuvB(12)-RuvC(2) complex forms which resolves the HJ.

The protein resides in the cytoplasm. It carries out the reaction ATP + H2O = ADP + phosphate + H(+). The RuvA-RuvB-RuvC complex processes Holliday junction (HJ) DNA during genetic recombination and DNA repair, while the RuvA-RuvB complex plays an important role in the rescue of blocked DNA replication forks via replication fork reversal (RFR). RuvA specifically binds to HJ cruciform DNA, conferring on it an open structure. The RuvB hexamer acts as an ATP-dependent pump, pulling dsDNA into and through the RuvAB complex. RuvB forms 2 homohexamers on either side of HJ DNA bound by 1 or 2 RuvA tetramers; 4 subunits per hexamer contact DNA at a time. Coordinated motions by a converter formed by DNA-disengaged RuvB subunits stimulates ATP hydrolysis and nucleotide exchange. Immobilization of the converter enables RuvB to convert the ATP-contained energy into a lever motion, pulling 2 nucleotides of DNA out of the RuvA tetramer per ATP hydrolyzed, thus driving DNA branch migration. The RuvB motors rotate together with the DNA substrate, which together with the progressing nucleotide cycle form the mechanistic basis for DNA recombination by continuous HJ branch migration. Branch migration allows RuvC to scan DNA until it finds its consensus sequence, where it cleaves and resolves cruciform DNA. This Streptococcus gordonii (strain Challis / ATCC 35105 / BCRC 15272 / CH1 / DL1 / V288) protein is Holliday junction branch migration complex subunit RuvB.